The primary structure comprises 333 residues: Fructose-1,6-bisphosphatase class 1 (333 aa).

4 residues coordinate Mg(2+): Glu-90, Asp-113, Leu-115, and Asp-116. Substrate contacts are provided by residues 116-119 (DGSS), Asn-209, Tyr-242, and Lys-272. Mg(2+) is bound at residue Glu-278.

Belongs to the FBPase class 1 family. As to quaternary structure, homotetramer. Mg(2+) serves as cofactor.

The protein localises to the cytoplasm. It carries out the reaction beta-D-fructose 1,6-bisphosphate + H2O = beta-D-fructose 6-phosphate + phosphate. The protein operates within carbohydrate biosynthesis; gluconeogenesis. This Pasteurella multocida (strain Pm70) protein is Fructose-1,6-bisphosphatase class 1.